The chain runs to 36 residues: Defensin-like turtle egg white protein TEWP (36 aa).

At Gln1 the chain carries Pyrrolidone carboxylic acid. 3 disulfides stabilise this stretch: Cys4–Cys30, Cys8–Cys29, and Cys12–Cys24.

Belongs to the beta-defensin family. Monomer. As to expression, detected in egg white (at protein level).

It localises to the secreted. Its function is as follows. Antibacterial and antiviral peptide. Has strong inhibitory activity towards E.coli and S.typhimurium. Has significant antiviral activity against Chandipura virus. In Caretta caretta (Loggerhead sea turtle), this protein is Defensin-like turtle egg white protein TEWP.